A 217-amino-acid polypeptide reads, in one-letter code: Large ribosomal subunit protein uL1 (217 aa).

Ser-2 carries the post-translational modification N-acetylserine. Tyr-11 carries the post-translational modification Phosphotyrosine. N6-acetyllysine occurs at positions 91 and 106. Lys-118 carries the N6-acetyllysine; alternate modification. Lys-118 participates in a covalent cross-link: Glycyl lysine isopeptide (Lys-Gly) (interchain with G-Cter in SUMO1); alternate. Lys-118 is covalently cross-linked (Glycyl lysine isopeptide (Lys-Gly) (interchain with G-Cter in SUMO2); alternate). Residue Lys-161 forms a Glycyl lysine isopeptide (Lys-Gly) (interchain with G-Cter in SUMO2) linkage.

This sequence belongs to the universal ribosomal protein uL1 family. Component of the large ribosomal subunit.

Its subcellular location is the cytoplasm. Component of the large ribosomal subunit. The ribosome is a large ribonucleoprotein complex responsible for the synthesis of proteins in the cell. The polypeptide is Large ribosomal subunit protein uL1 (RPL10A) (Bos taurus (Bovine)).